The sequence spans 235 residues: Regulator of G-protein signaling 18 (235 aa).

Ser-49 carries the post-translational modification Phosphoserine. The RGS domain maps to 86–202 (SFDKLLSHRD…LKSETYLHLI (117 aa)). Ser-216 and Ser-218 each carry phosphoserine.

Expressed in bone marrow, spleen, fetal liver and lung. At very low levels expressed in heart.

The protein resides in the cytoplasm. Its function is as follows. Inhibits signal transduction by increasing the GTPase activity of G protein alpha subunits thereby driving them into their inactive GDP-bound form. Binds to G(i) alpha-1, G(i) alpha-2, G(i) alpha-3 and G(q) alpha. This chain is Regulator of G-protein signaling 18 (Rgs18), found in Mus musculus (Mouse).